The sequence spans 286 residues: uncharacterized protein (286 aa).

Histidine 183 serves as the catalytic Proton donor. Cysteine 277 acts as the Nucleophile in catalysis.

Belongs to the DDAH family.

This is an uncharacterized protein from Bacillus subtilis (strain 168).